The sequence spans 1392 residues: FERM and PDZ domain-containing protein 2 (1392 aa).

The KIND domain occupies 15–197; it reads VTLASALQVR…SEVERRVVEE (183 aa). A disordered region spans residues 211-246; sequence SRLHQADGESPGAPASDALQPRRVSERSAETQSSLE. In terms of domain architecture, FERM spans 342 to 642; sequence CVVLLNGRCL…WFNAQTGSKH (301 aa). The PDZ 1 domain maps to 775–861; sequence GLFGEPNQDI…MAVRMIQNSP (87 aa). Positions 903-930 are disordered; that stretch reads GRQSPHIHDQDRSVRGTEMAQGAGSCPP. A compositionally biased stretch (basic and acidic residues) spans 908–917; that stretch reads HIHDQDRSVR. An interaction with GRIN2A and GRIN2B region spans residues 937–1027; it reads TGEIYFVELV…VARLVLERRG (91 aa). PDZ domains follow at residues 950–1035 and 1079–1167; these read GTLG…PQCP and RGLG…PEME. The segment at 1186 to 1236 is disordered; the sequence is CAGSEQSPSLDQEDNWRDSTSLDAGEGLSPGPESSYKDVRQVKGDREKERP. Over residues 1220–1236 the composition is skewed to basic and acidic residues; the sequence is SYKDVRQVKGDREKERP.

In terms of assembly, interacts (via the second PDZ domain) with CTNND2 (via the extreme C-terminus). Interacts (via the second PDZ domain) with PKP4 (via the extreme C-terminus); the interaction directs FRMPD2 to the basolateral membranes. Interacts (via the second PDZ domain) with ARVCF (via the extreme C-terminus). Interacts (via the second PDZ domain) with NMDAR subunits GRIN2A/GLUN2A and GRIN2B/GLUN2B (via the extreme C-terminus); the interaction is direct and is likely to promote NMDAR-mediated neural signal transmission. Binds GRIN2A with lower affinity than GRIN2B. Interacts (via the third PDZ domain) with LRIT1 (via the extreme C-terminus); the interaction leads to their colocalization in photoreceptor synapses. Interacts with NOD2; the interaction is likely to trigger NOD2-mediated nuclear factor kappaB activation.

The protein resides in the cytoplasm. Its subcellular location is the postsynaptic density. It localises to the basolateral cell membrane. It is found in the cell junction. The protein localises to the tight junction. Functionally, functions as a scaffold protein and likely plays a role in N-methyl-D-aspartic acid receptor (NMDAR)-mediated synaptic excitatory transmission. May be involved in synapse formation in cone photoreceptor cells. May play a role in the regulation of tight junction formation. Binds phosphatidylinositol 3,4-bisphosphate (PtdIns(3,4)P2). May pNF-kappa-Blay a role in the regulation of NOD2-mediated NF-kappa-B activation in immune response. The polypeptide is FERM and PDZ domain-containing protein 2 (Mus musculus (Mouse)).